We begin with the raw amino-acid sequence, 143 residues long: Nucleoside diphosphate kinase (143 aa).

The ATP site is built by Lys11, Phe59, Arg87, Thr93, Arg104, and Asn114. His117 serves as the catalytic Pros-phosphohistidine intermediate.

It belongs to the NDK family. In terms of assembly, homotetramer. Mg(2+) is required as a cofactor.

Its subcellular location is the cytoplasm. The catalysed reaction is a 2'-deoxyribonucleoside 5'-diphosphate + ATP = a 2'-deoxyribonucleoside 5'-triphosphate + ADP. It carries out the reaction a ribonucleoside 5'-diphosphate + ATP = a ribonucleoside 5'-triphosphate + ADP. Major role in the synthesis of nucleoside triphosphates other than ATP. The ATP gamma phosphate is transferred to the NDP beta phosphate via a ping-pong mechanism, using a phosphorylated active-site intermediate. This is Nucleoside diphosphate kinase from Edwardsiella ictaluri (strain 93-146).